The following is a 258-amino-acid chain: Imidazole glycerol phosphate synthase subunit HisF (258 aa).

Active-site residues include Asp-11 and Asp-130.

It belongs to the HisA/HisF family. Heterodimer of HisH and HisF.

It is found in the cytoplasm. It carries out the reaction 5-[(5-phospho-1-deoxy-D-ribulos-1-ylimino)methylamino]-1-(5-phospho-beta-D-ribosyl)imidazole-4-carboxamide + L-glutamine = D-erythro-1-(imidazol-4-yl)glycerol 3-phosphate + 5-amino-1-(5-phospho-beta-D-ribosyl)imidazole-4-carboxamide + L-glutamate + H(+). It participates in amino-acid biosynthesis; L-histidine biosynthesis; L-histidine from 5-phospho-alpha-D-ribose 1-diphosphate: step 5/9. Functionally, IGPS catalyzes the conversion of PRFAR and glutamine to IGP, AICAR and glutamate. The HisF subunit catalyzes the cyclization activity that produces IGP and AICAR from PRFAR using the ammonia provided by the HisH subunit. This is Imidazole glycerol phosphate synthase subunit HisF from Haemophilus influenzae (strain 86-028NP).